Consider the following 256-residue polypeptide: Triosephosphate isomerase (256 aa).

9–11 (NWK) is a substrate binding site. Histidine 97 (electrophile) is an active-site residue. Residue glutamate 169 is the Proton acceptor of the active site. Substrate is bound by residues glycine 175, serine 214, and 235–236 (GG).

Belongs to the triosephosphate isomerase family. In terms of assembly, homodimer.

The protein resides in the cytoplasm. It catalyses the reaction D-glyceraldehyde 3-phosphate = dihydroxyacetone phosphate. The protein operates within carbohydrate biosynthesis; gluconeogenesis. It functions in the pathway carbohydrate degradation; glycolysis; D-glyceraldehyde 3-phosphate from glycerone phosphate: step 1/1. Functionally, involved in the gluconeogenesis. Catalyzes stereospecifically the conversion of dihydroxyacetone phosphate (DHAP) to D-glyceraldehyde-3-phosphate (G3P). This Aliivibrio salmonicida (strain LFI1238) (Vibrio salmonicida (strain LFI1238)) protein is Triosephosphate isomerase.